Reading from the N-terminus, the 353-residue chain is Probable D-xylulose reductase A (353 aa).

Residues cysteine 42, histidine 67, and glutamate 68 each contribute to the Zn(2+) site. An NAD(+)-binding site is contributed by 177-182; it reads GAGPVG.

It belongs to the zinc-containing alcohol dehydrogenase family. It depends on Zn(2+) as a cofactor.

The enzyme catalyses xylitol + NAD(+) = D-xylulose + NADH + H(+). Its pathway is carbohydrate degradation; L-arabinose degradation via L-arabinitol; D-xylulose 5-phosphate from L-arabinose (fungal route): step 4/5. In terms of biological role, xylitol dehydrogenase which catalyzes the conversion of xylitol to D-xylulose. Xylose is a major component of hemicelluloses such as xylan. Most fungi utilize D-xylose via three enzymatic reactions, xylose reductase (XR), xylitol dehydrogenase (XDH), and xylulokinase, to form xylulose 5-phosphate, which enters pentose phosphate pathway. The polypeptide is Probable D-xylulose reductase A (xdhA) (Aspergillus terreus (strain NIH 2624 / FGSC A1156)).